The chain runs to 176 residues: Thiol-disulfide oxidoreductase ResA (176 aa).

The chain crosses the membrane as a helical; Signal-anchor for type II membrane protein span at residues 11–30; the sequence is LSILAVISVALGYTFYSNFF. Residues 36-176 form the Thioredoxin domain; sequence ARAGEQAVNF…EFMELIKPEA (141 aa). The cysteines at positions 74 and 77 are disulfide-linked.

This sequence belongs to the thioredoxin family. ResA subfamily.

The protein localises to the cell membrane. The protein operates within protein modification; cytochrome c assembly. Thiol-disulfide oxidoreductase which is required in disulfide reduction during c-type cytochrome synthesis. May accept reducing equivalents from CcdA, leading to breakage of disulfide bonds in apocytochrome c; following this reduction heme can be covalently attached. The chain is Thiol-disulfide oxidoreductase ResA from Halalkalibacterium halodurans (strain ATCC BAA-125 / DSM 18197 / FERM 7344 / JCM 9153 / C-125) (Bacillus halodurans).